Here is a 156-residue protein sequence, read N- to C-terminus: Phosphopantetheine adenylyltransferase (156 aa).

Thr9 lines the substrate pocket. Residues 9–10 (TF) and His17 contribute to the ATP site. Residues Lys41, Leu73, and Arg87 each coordinate substrate. ATP contacts are provided by residues 88–90 (GVR), Glu98, and 123–129 (WAFVSST).

Belongs to the bacterial CoaD family. In terms of assembly, homohexamer. Mg(2+) serves as cofactor.

Its subcellular location is the cytoplasm. The catalysed reaction is (R)-4'-phosphopantetheine + ATP + H(+) = 3'-dephospho-CoA + diphosphate. It participates in cofactor biosynthesis; coenzyme A biosynthesis; CoA from (R)-pantothenate: step 4/5. Reversibly transfers an adenylyl group from ATP to 4'-phosphopantetheine, yielding dephospho-CoA (dPCoA) and pyrophosphate. This chain is Phosphopantetheine adenylyltransferase, found in Haemophilus influenzae (strain 86-028NP).